The following is a 181-amino-acid chain: Transcription antitermination protein NusB (181 aa).

The interval 1–36 (MTEDNNKAAGAKPRPARQVRTGLTSTGARKASAKSN) is disordered.

Belongs to the NusB family.

Functionally, involved in transcription antitermination. Required for transcription of ribosomal RNA (rRNA) genes. Binds specifically to the boxA antiterminator sequence of the ribosomal RNA (rrn) operons. In Variovorax paradoxus (strain S110), this protein is Transcription antitermination protein NusB.